Here is an 87-residue protein sequence, read N- to C-terminus: Cell division topological specificity factor (87 aa).

The protein belongs to the MinE family.

Its function is as follows. Prevents the cell division inhibition by proteins MinC and MinD at internal division sites while permitting inhibition at polar sites. This ensures cell division at the proper site by restricting the formation of a division septum at the midpoint of the long axis of the cell. The sequence is that of Cell division topological specificity factor from Blochmanniella pennsylvanica (strain BPEN).